A 940-amino-acid chain; its full sequence is Mitogen-activated protein kinase kinase kinase 10 (940 aa).

One can recognise an SH3 domain in the interval 16 to 81; the sequence is PAGPVWTAVF…PSNYVAPAAP (66 aa). A Protein kinase domain is found at 98 to 360; sequence LQLEEIIGVG…GSILKQLEVI (263 aa). ATP is bound by residues 104-112 and lysine 125; that span reads IGVGGFGKV. The active-site Proton acceptor is the aspartate 222. Threonine 258 carries the phosphothreonine; by autocatalysis modification. A Phosphoserine; by autocatalysis and MAP4K1 modification is found at serine 262. Leucine-zipper stretches follow at residues 384–405 and 419–440; these read IQHMFDDLRTKEKELRSREEEL and LRRREQELAEREMDIVERELHL. Disordered regions lie at residues 490-599, 687-734, and 749-917; these read PTLD…MAPG, RAGD…GLAP, and STRS…QPTL. Phosphoserine occurs at positions 498, 502, and 506. Low complexity predominate over residues 501–511; the sequence is ASPPASPSIIP. At threonine 552 the chain carries Phosphothreonine. Composition is skewed to basic and acidic residues over residues 560–572 and 687–698; these read QKERAGGEERLKA and RAGDGEEQRRWL. The segment covering 765 to 775 has biased composition (pro residues); the sequence is APSPPPSPLAP. A compositionally biased stretch (basic and acidic residues) spans 822 to 840; the sequence is LRQREPLELTNHGPRDPLD. The residue at position 843 (arginine 843) is an Omega-N-methylarginine. Positions 899–913 are enriched in pro residues; that stretch reads PSRPDTPESPGPPSV.

It belongs to the protein kinase superfamily. STE Ser/Thr protein kinase family. MAP kinase kinase kinase subfamily. As to quaternary structure, homodimer. Interacts with SH3RF2. The cofactor is Mg(2+). In terms of processing, autophosphorylation on serine and threonine residues within the activation loop plays a role in enzyme activation.

The enzyme catalyses L-seryl-[protein] + ATP = O-phospho-L-seryl-[protein] + ADP + H(+). It carries out the reaction L-threonyl-[protein] + ATP = O-phospho-L-threonyl-[protein] + ADP + H(+). Its activity is regulated as follows. Homodimerization via the leucine zipper domains is required for autophosphorylation and subsequent activation. Activates the JUN N-terminal pathway. This chain is Mitogen-activated protein kinase kinase kinase 10 (Map3k10), found in Mus musculus (Mouse).